We begin with the raw amino-acid sequence, 360 residues long: DNA replication and repair protein RecF (360 aa).

30–37 (GANGSGKT) provides a ligand contact to ATP.

It belongs to the RecF family.

Its subcellular location is the cytoplasm. The RecF protein is involved in DNA metabolism; it is required for DNA replication and normal SOS inducibility. RecF binds preferentially to single-stranded, linear DNA. It also seems to bind ATP. The sequence is that of DNA replication and repair protein RecF from Acinetobacter baumannii (strain ATCC 17978 / DSM 105126 / CIP 53.77 / LMG 1025 / NCDC KC755 / 5377).